Consider the following 134-residue polypeptide: Transmembrane protein 100 (134 aa).

2 helical membrane passes run 56–76 and 84–104; these read CIIPFAVVVFIAGIVVTAVAY and IISIFGLVVLSSGLFLLASSA. Phosphoserine is present on Ser-121.

Interacts (via C-terminus) with TRPA1 and TRPV1. Interacts with TASOR. Expressed in neurons of the myenteric and submucosal plexuses in the gastric body, jejunum and proximal colon. Expressed in arterial endothelial cells and neurons of the central nervous system and peripheral nervous system. Expressed in umbilical artery endothelial cells (at protein level).

Its subcellular location is the cell membrane. It localises to the membrane. The protein localises to the perikaryon. The protein resides in the cytoplasm. It is found in the perinuclear region. Its subcellular location is the endoplasmic reticulum. In terms of biological role, plays a role during embryonic arterial endothelium differentiation and vascular morphogenesis through the ACVRL1 receptor-dependent signaling pathway upon stimulation by bone morphogenetic proteins, such as GDF2/BMP9 and BMP10. Involved in the regulation of nociception, acting as a modulator of the interaction between TRPA1 and TRPV1, two molecular sensors and mediators of pain signals in dorsal root ganglia (DRG) neurons. Mechanistically, it weakens their interaction, thereby releasing the inhibition of TRPA1 by TRPV1 and increasing the single-channel open probability of the TRPA1-TRPV1 complex. This is Transmembrane protein 100 (TMEM100) from Homo sapiens (Human).